An 864-amino-acid polypeptide reads, in one-letter code: Leucine--tRNA ligase (864 aa).

Positions 42-52 (PYPSGKLHMGH) match the 'HIGH' region motif. The short motif at 624 to 628 (KMSKS) is the 'KMSKS' region element. Residue Lys-627 coordinates ATP.

Belongs to the class-I aminoacyl-tRNA synthetase family.

It is found in the cytoplasm. It catalyses the reaction tRNA(Leu) + L-leucine + ATP = L-leucyl-tRNA(Leu) + AMP + diphosphate. This chain is Leucine--tRNA ligase, found in Burkholderia pseudomallei (strain 1710b).